A 154-amino-acid chain; its full sequence is Protein Smg homolog (154 aa).

It belongs to the Smg family.

The protein is Protein Smg homolog of Aromatoleum aromaticum (strain DSM 19018 / LMG 30748 / EbN1) (Azoarcus sp. (strain EbN1)).